Here is a 420-residue protein sequence, read N- to C-terminus: Probable pectate lyase C (420 aa).

Residues 1 to 20 (MKLSAPLLVSLAAFSQAVTA) form the signal peptide. 3 N-linked (GlcNAc...) asparagine glycosylation sites follow: N49, N165, and N202. R205 is an active-site residue. The region spanning 262 to 297 (NANFHGYVDNNYYDPDKDGQLDGSELGVSSSNYGGM) is the EF-hand domain. 5 residues coordinate Ca(2+): D275, D277, D279, Q281, and E286. Residues 357-395 (ATMGGPGTLNGGTPAKDTDGDGIPDEAEKQLGTDPNTND) are disordered. The N-linked (GlcNAc...) asparagine glycan is linked to N394.

Belongs to the polysaccharide lyase 1 family. It depends on Ca(2+) as a cofactor.

The protein resides in the secreted. The catalysed reaction is Eliminative cleavage of (1-&gt;4)-alpha-D-galacturonan to give oligosaccharides with 4-deoxy-alpha-D-galact-4-enuronosyl groups at their non-reducing ends.. In terms of biological role, pectinolytic enzyme consist of four classes of enzymes: pectin lyase, polygalacturonase, pectin methylesterase and rhamnogalacturonase. Among pectinolytic enzymes, pectin lyase is the most important in depolymerization of pectin, since it cleaves internal glycosidic bonds of highly methylated pectins. Favors pectate, the anion, over pectin, the methyl ester. The protein is Probable pectate lyase C (plyC) of Neosartorya fischeri (strain ATCC 1020 / DSM 3700 / CBS 544.65 / FGSC A1164 / JCM 1740 / NRRL 181 / WB 181) (Aspergillus fischerianus).